Here is a 158-residue protein sequence, read N- to C-terminus: Phosphopantetheine adenylyltransferase (158 aa).

Residue threonine 10 coordinates substrate. Residues 10-11 (TF) and histidine 18 each bind ATP. Substrate-binding residues include lysine 42, leucine 74, and arginine 88. Residues 89–91 (GLR), glutamate 99, and 124–130 (NSFISST) contribute to the ATP site.

Belongs to the bacterial CoaD family. Homohexamer. Requires Mg(2+) as cofactor.

Its subcellular location is the cytoplasm. The catalysed reaction is (R)-4'-phosphopantetheine + ATP + H(+) = 3'-dephospho-CoA + diphosphate. It participates in cofactor biosynthesis; coenzyme A biosynthesis; CoA from (R)-pantothenate: step 4/5. Reversibly transfers an adenylyl group from ATP to 4'-phosphopantetheine, yielding dephospho-CoA (dPCoA) and pyrophosphate. The chain is Phosphopantetheine adenylyltransferase from Shewanella woodyi (strain ATCC 51908 / MS32).